The chain runs to 130 residues: Large ribosomal subunit protein uL14 (130 aa).

It belongs to the universal ribosomal protein uL14 family. Part of the 50S ribosomal subunit. Forms a cluster with proteins L3 and L19. In the 70S ribosome, L14 and L19 interact and together make contacts with the 16S rRNA in bridges B5 and B8.

Its function is as follows. Binds to 23S rRNA. Forms part of two intersubunit bridges in the 70S ribosome. This chain is Large ribosomal subunit protein uL14, found in Helicobacter pylori (strain P12).